Here is an 805-residue protein sequence, read N- to C-terminus: Leucine--tRNA ligase (805 aa).

The short motif at P40 to H51 is the 'HIGH' region element. The 'KMSKS' region signature appears at K576–S580. K579 provides a ligand contact to ATP.

Belongs to the class-I aminoacyl-tRNA synthetase family.

The protein resides in the cytoplasm. It catalyses the reaction tRNA(Leu) + L-leucine + ATP = L-leucyl-tRNA(Leu) + AMP + diphosphate. This chain is Leucine--tRNA ligase, found in Chlorobium limicola (strain DSM 245 / NBRC 103803 / 6330).